A 433-amino-acid polypeptide reads, in one-letter code: ATP-dependent protease ATPase subunit HslU (433 aa).

ATP contacts are provided by residues valine 18, 60–65 (GVGKTE), aspartate 246, glutamate 311, and arginine 383.

This sequence belongs to the ClpX chaperone family. HslU subfamily. A double ring-shaped homohexamer of HslV is capped on each side by a ring-shaped HslU homohexamer. The assembly of the HslU/HslV complex is dependent on binding of ATP.

It is found in the cytoplasm. ATPase subunit of a proteasome-like degradation complex; this subunit has chaperone activity. The binding of ATP and its subsequent hydrolysis by HslU are essential for unfolding of protein substrates subsequently hydrolyzed by HslV. HslU recognizes the N-terminal part of its protein substrates and unfolds these before they are guided to HslV for hydrolysis. This chain is ATP-dependent protease ATPase subunit HslU, found in Nitrobacter hamburgensis (strain DSM 10229 / NCIMB 13809 / X14).